Here is a 192-residue protein sequence, read N- to C-terminus: Ubiquitin-conjugating enzyme E2 T (192 aa).

Residues 2–152 (QRVSRLKREL…AKKWTEKHAL (151 aa)) enclose the UBC core domain. Residue C86 is the Glycyl thioester intermediate of the active site. The interval 150-192 (HALPAPQGSDKESQEKSGSSEGTSHKRKSAEIAEESKKPCREP) is disordered. Positions 178–192 (SAEIAEESKKPCREP) are enriched in basic and acidic residues.

Belongs to the ubiquitin-conjugating enzyme family.

Its subcellular location is the nucleus. It catalyses the reaction S-ubiquitinyl-[E1 ubiquitin-activating enzyme]-L-cysteine + [E2 ubiquitin-conjugating enzyme]-L-cysteine = [E1 ubiquitin-activating enzyme]-L-cysteine + S-ubiquitinyl-[E2 ubiquitin-conjugating enzyme]-L-cysteine.. It functions in the pathway protein modification; protein ubiquitination. Functionally, accepts ubiquitin from the E1 complex and catalyzes its covalent attachment to other proteins. Catalyzes monoubiquitination. Involved in DNA repair. This Xenopus laevis (African clawed frog) protein is Ubiquitin-conjugating enzyme E2 T (ube2t).